We begin with the raw amino-acid sequence, 314 residues long: Ribosomal protein L11 methyltransferase (314 aa).

Threonine 163, glycine 184, aspartate 206, and asparagine 248 together coordinate S-adenosyl-L-methionine.

Belongs to the methyltransferase superfamily. PrmA family.

It is found in the cytoplasm. The enzyme catalyses L-lysyl-[protein] + 3 S-adenosyl-L-methionine = N(6),N(6),N(6)-trimethyl-L-lysyl-[protein] + 3 S-adenosyl-L-homocysteine + 3 H(+). Functionally, methylates ribosomal protein L11. This is Ribosomal protein L11 methyltransferase from Lactobacillus delbrueckii subsp. bulgaricus (strain ATCC 11842 / DSM 20081 / BCRC 10696 / JCM 1002 / NBRC 13953 / NCIMB 11778 / NCTC 12712 / WDCM 00102 / Lb 14).